The following is a 412-amino-acid chain: Eukaryotic initiation factor 4A-2 (412 aa).

Ala2 bears the N-acetylalanine mark. The Q motif motif lies at 39 to 67; sequence ESFDAMGLQENLLRGIYAYGFEKPSAIQQ. The 171-residue stretch at 70-240 folds into the Helicase ATP-binding domain; that stretch reads IVPFCKGLDV…RKFMSKPVRI (171 aa). 83–90 is a binding site for ATP; sequence AQSGTGKT. Thr145 is subject to Phosphothreonine. Positions 188–191 match the DEAD box motif; sequence DEAD. The region spanning 251 to 412 is the Helicase C-terminal domain; it reads GIKQFYVNVE…ELPSNVADLL (162 aa).

The protein belongs to the DEAD box helicase family. eIF4A subfamily. In terms of assembly, eIF4F is a multi-subunit complex, the composition of which varies with external and internal environmental conditions. It is composed of at least EIF4A, EIF4E and EIF4G. Ubiquitous. Preferentially expressed in flowers, young leaves and roots.

It localises to the cytoplasm. The enzyme catalyses ATP + H2O = ADP + phosphate + H(+). Functionally, ATP-dependent RNA helicase which is a subunit of the eIF4F complex involved in cap recognition and is required for mRNA binding to ribosome. In the current model of translation initiation, eIF4A unwinds RNA secondary structures in the 5'-UTR of mRNAs which is necessary to allow efficient binding of the small ribosomal subunit, and subsequent scanning for the initiator codon. The polypeptide is Eukaryotic initiation factor 4A-2 (TIF4A-2) (Arabidopsis thaliana (Mouse-ear cress)).